Consider the following 611-residue polypeptide: Sodium-coupled monocarboxylate transporter 1 (611 aa).

Over 1–9 the chain is Extracellular; that stretch reads MDASRDIGS. The chain crosses the membrane as a helical span at residues 10–30; that stretch reads FVVWDYVVFAGMLLISAAIGI. Topologically, residues 31 to 51 are cytoplasmic; it reads YYAFAGGGQQTSKDFLMGGRS. Residues 52 to 72 traverse the membrane as a helical segment; it reads MSAVPVALSLTASFMSAVTVL. At 73-86 the chain is on the extracellular side; sequence GTPAEVYRFGAIFS. Residues 87 to 107 traverse the membrane as a helical segment; sequence IFVITYFFVVVISAEVFLPVF. Residues 108–132 are Cytoplasmic-facing; that stretch reads YRLGITSTYEYLELRFNRCIRLCGT. A helical transmembrane segment spans residues 133–153; sequence ILFIVQTILYTGIVIYAPALA. Residues 154–161 lie on the Extracellular side of the membrane; sequence LNQVTGFD. A helical membrane pass occupies residues 162–182; that stretch reads LWGAVVATGVVCTFYCTLGGL. Over 183–184 the chain is Cytoplasmic; the sequence is KA. Residues 185-205 traverse the membrane as a helical segment; that stretch reads VVWTDVFQVGIMVAGFASVII. Over 206 to 239 the chain is Extracellular; that stretch reads QASITQHGINKILSDAFNGGRLNFWNFDPNPLQR. The chain crosses the membrane as a helical span at residues 240–260; it reads HTFWTIVIGGTFTWTTIYGVN. The Cytoplasmic segment spans residues 261 to 279; it reads QSQVQRYISCKSRLHAKLS. The helical transmembrane segment at 280 to 300 threads the bilayer; it reads LYVNLVGLWVILTCSIFCGLA. The Extracellular portion of the chain corresponds to 301–336; sequence LYSRYRECDPWTSKKVSAIDQLMPYLVLDILKNYPG. Residues 337–359 traverse the membrane as a helical segment; it reads VPGLFVACAYSGTLSTVSSSINA. Topologically, residues 360-389 are cytoplasmic; it reads LAAVTVEDLIKPRFKSLSEKSLSWISQGMS. A helical transmembrane segment spans residues 390 to 410; that stretch reads VLYGALCIGMAALASLMGALL. The Extracellular segment spans residues 411–415; that stretch reads QAALS. The helical transmembrane segment at 416-436 threads the bilayer; it reads IFGMVGGPLLGLFSLGILVPF. The Cytoplasmic segment spans residues 437 to 439; it reads ANS. Residues 440 to 460 traverse the membrane as a helical segment; the sequence is IGALTGLLAGFAISLWVGIGA. Topologically, residues 461-518 are extracellular; that stretch reads QLYPPLPERTLPLPLETYGCNITHNGSDWMSTTEMPFSTSAFQIHNAERTPLMDNWYS. N-linked (GlcNAc...) asparagine glycosylation is present at N485. The helical transmembrane segment at 519–539 threads the bilayer; the sequence is LSYLYFSTIGTLTTLFVGILI. Topologically, residues 540 to 611 are cytoplasmic; the sequence is SLSTGGRKQN…HSGKINGTRL (72 aa). The PDZ-binding signature appears at 609-611; it reads TRL.

This sequence belongs to the sodium:solute symporter (SSF) (TC 2.A.21) family. In terms of assembly, interacts (via PDZ-binding motif) with PDZK1 (via PDZ domains 1 and 3); interaction increases nicotinate transport activity of SLC5A8. As to expression, expressed in brain, colon, kidney and in the ileum and jejunum of small intestine. In the kidney, expression occurred in the proximal tubule and the loop of Henle, being restricted to tubular epithelial cells in both the cortex and the medulla. In the colon, predominantly expressed in the distal half of the large bowel and in the most terminal ileum. Localized selectively in the luminal surface of crypts in the large intestine and to the brush border in the middle parts of crypts in the cecum. In the brain, expression was seen throughout, exclusively in neurons, including the cortex, hippocampus, cerebellum and pituitary gland (at protein level). Expression is reduced in oligodendrogliomas.

The protein localises to the apical cell membrane. The enzyme catalyses (S)-lactate(out) + 2 Na(+)(out) = (S)-lactate(in) + 2 Na(+)(in). It carries out the reaction propanoate(out) + 2 Na(+)(out) = propanoate(in) + 2 Na(+)(in). It catalyses the reaction pyruvate(out) + 2 Na(+)(out) = pyruvate(in) + 2 Na(+)(in). The catalysed reaction is acetate(out) + 2 Na(+)(out) = acetate(in) + 2 Na(+)(in). The enzyme catalyses butanoate(out) + 2 Na(+)(out) = butanoate(in) + 2 Na(+)(in). It carries out the reaction nicotinate(out) + 2 Na(+)(out) = nicotinate(in) + 2 Na(+)(in). It catalyses the reaction (R)-3-hydroxybutanoate(out) + 2 Na(+)(out) = (R)-3-hydroxybutanoate(in) + 2 Na(+)(in). The catalysed reaction is acetoacetate(out) + 2 Na(+)(out) = acetoacetate(in) + 2 Na(+)(in). The enzyme catalyses 4-methyl-2-oxopentanoate(out) + 2 Na(+)(out) = 4-methyl-2-oxopentanoate(in) + 2 Na(+)(in). It carries out the reaction 5-oxo-L-proline(out) + 2 Na(+)(out) = 5-oxo-L-proline(in) + 2 Na(+)(in). It catalyses the reaction iodide(out) = iodide(in). The catalysed reaction is chloride(in) = chloride(out). The enzyme catalyses nitrate(in) = nitrate(out). It carries out the reaction bromide(in) = bromide(out). With respect to regulation, transport of D-lactate and pyruvate stimulated by alpha-cyano-4-hydroxycinnamic acid, but inhibited by the short-chain fatty acids acetate, propionate and butyrate. Functionally, acts as an electrogenic sodium (Na(+)) and chloride (Cl-)-dependent sodium-coupled solute transporter, including transport of monocarboxylates (short-chain fatty acids including L-lactate, D-lactate, pyruvate, acetate, propionate, valerate and butyrate), mocarboxylate drugs (nicotinate, benzoate, salicylate and 5-aminosalicylate) and ketone bodies (beta-D-hydroxybutyrate, acetoacetate and alpha-ketoisocaproate), with a Na(+):substrate stoichiometry of between 4:1 and 2:1. Catalyzes passive carrier mediated diffusion of iodide. Mediates iodide transport from the thyrocyte into the colloid lumen through the apical membrane. May be responsible for the absorption of D-lactate and monocarboxylate drugs from the intestinal tract. May play a critical role in the entry of L-lactate and ketone bodies into neurons by a process driven by an electrochemical Na(+) gradient and hence contribute to the maintenance of the energy status and function of neurons. Mediates sodium-coupled electrogenic transport of pyroglutamate (5-oxo-L-proline). Can mediate the transport of chloride, bromide, iodide and nitrate ions when external concentration of sodium ions is reduced. The chain is Sodium-coupled monocarboxylate transporter 1 from Mus musculus (Mouse).